We begin with the raw amino-acid sequence, 139 residues long: Iron-sulfur cluster assembly 1 homolog, mitochondrial (139 aa).

Fe cation contacts are provided by Cys-52, Cys-117, and Cys-119.

Belongs to the HesB/IscA family.

It is found in the mitochondrion. Involved in the assembly of mitochondrial iron-sulfur proteins. Probably involved in the binding of an intermediate of Fe/S cluster assembly. In Dictyostelium discoideum (Social amoeba), this protein is Iron-sulfur cluster assembly 1 homolog, mitochondrial (isca1).